Reading from the N-terminus, the 589-residue chain is Guanylate-binding protein 2 (589 aa).

A GTPase domain (Globular) region spans residues 1–309 (MASEIHMSEP…GAISNGSLPC (309 aa)). The 242-residue stretch at 35–276 (TQPVVVVAIV…FTSYILSYSS (242 aa)) folds into the GB1/RHD3-type G domain. GTP contacts are provided by residues 45 to 52 (GLYRTGKS), 181 to 182 (RD), and L245. Cysteine methyl ester is present on C586. C586 carries the S-geranylgeranyl cysteine lipid modification. A propeptide spans 587 to 589 (TIL) (removed in mature form).

It belongs to the TRAFAC class dynamin-like GTPase superfamily. GB1/RHD3 GTPase family. GB1 subfamily. Homodimer; homodimerization occurs upon GTP-binding and is required for the association with membranous structures. Heterodimer with other family members, including GBP1, GBP3, GBP4 and GBP5. Post-translationally, isoprenylation is required for proper subcellular location.

The protein resides in the cytoplasmic vesicle membrane. It localises to the golgi apparatus membrane. It is found in the cytoplasm. The protein localises to the perinuclear region. The enzyme catalyses GTP + H2O = GDP + phosphate + H(+). In terms of biological role, interferon (IFN)-inducible GTPase that plays important roles in innate immunity against a diverse range of bacterial, viral and protozoan pathogens. Hydrolyzes GTP to GMP in 2 consecutive cleavage reactions, but the major reaction product is GDP. Following infection, recruited to the pathogen-containing vacuoles or vacuole-escaped bacteria and acts as a positive regulator of inflammasome assembly by promoting the release of inflammasome ligands from bacteria. Acts by promoting lysis of pathogen-containing vacuoles, releasing pathogens into the cytosol. Following pathogen release in the cytosol, promotes recruitment of proteins that mediate bacterial cytolysis, such as Gm12250/Irgb10: this liberates ligands that are detected by inflammasomes, such as lipopolysaccharide (LPS) that activates the non-canonical CASP4/CASP11 inflammasome or double-stranded DNA (dsDNA) that activates the AIM2 inflammasome. Confers protection to the protozoan pathogen Toxoplasma gondii. Independently of its GTPase activity, acts as an inhibitor of various viruses infectivity by inhibiting FURIN-mediated maturation of viral envelope proteins. In Mus musculus (Mouse), this protein is Guanylate-binding protein 2.